A 628-amino-acid polypeptide reads, in one-letter code: Kinesin-like protein subito (628 aa).

Residues 28 to 68 (RFRPRPNKKMRLFDNIQESEEESFSEYSDTESEYKYQSSEA) form a disordered region. The span at 44 to 58 (QESEEESFSEYSDTE) shows a compositional bias: acidic residues. Positions 87-479 (GPQVFLRLRP…LNFASIAKNI (393 aa)) constitute a Kinesin motor domain. 169–176 (GTSGSGKT) lines the ATP pocket. Positions 509 to 612 (DYTKELEDEN…KNPASDTDIS (104 aa)) form a coiled coil. Positions 596 to 628 (KDEIEELKNPASDTDISDDPNESKSPIEILDDD) are disordered. A Phosphoserine modification is found at serine 607. Position 609 is a phosphothreonine (threonine 609). Serine 612 bears the Phosphoserine mark.

It belongs to the TRAFAC class myosin-kinesin ATPase superfamily. Kinesin family.

The protein resides in the cytoplasm. The protein localises to the cytoskeleton. In terms of biological role, required during female meiosis for bipolar spindle formation in the absence of the centrosomes and chromosome homolog segregation. Also has roles in male meiosis and mitotic divisions of the early embryo. This chain is Kinesin-like protein subito (sub), found in Drosophila melanogaster (Fruit fly).